The chain runs to 398 residues: Glutamyl-tRNA reductase (398 aa).

Residues 45 to 48 (TCNR), Ser-88, 93 to 95 (EDQ), and Gln-99 contribute to the substrate site. Residue Cys-46 is the Nucleophile of the active site. 168 to 173 (GAGKMG) contributes to the NADP(+) binding site.

This sequence belongs to the glutamyl-tRNA reductase family. As to quaternary structure, homodimer.

It carries out the reaction (S)-4-amino-5-oxopentanoate + tRNA(Glu) + NADP(+) = L-glutamyl-tRNA(Glu) + NADPH + H(+). It functions in the pathway porphyrin-containing compound metabolism; protoporphyrin-IX biosynthesis; 5-aminolevulinate from L-glutamyl-tRNA(Glu): step 1/2. Its function is as follows. Catalyzes the NADPH-dependent reduction of glutamyl-tRNA(Glu) to glutamate 1-semialdehyde (GSA). The protein is Glutamyl-tRNA reductase (hemA) of Methanothermobacter marburgensis (strain ATCC BAA-927 / DSM 2133 / JCM 14651 / NBRC 100331 / OCM 82 / Marburg) (Methanobacterium thermoautotrophicum).